An 879-amino-acid polypeptide reads, in one-letter code: DNA methyltransferase A (879 aa).

This sequence belongs to the methyltransferase superfamily.

It catalyses the reaction a 2'-deoxyadenosine in DNA + S-adenosyl-L-methionine = an N(6)-methyl-2'-deoxyadenosine in DNA + S-adenosyl-L-homocysteine + H(+). In terms of biological role, recognizes the double-stranded sequence 5'-GACGAG-3' and methylates A-5, yielding m6A. m6A methylation functions as a transcriptional modifier, promoting transcription of a number of genes (at least scpA, hbs, rnhC, yumC and zapA). One studied mechanism is via transcriptional repressor ScoC (also called hpr) which binds to non-methylated scpA promoter; when the m6A target is methylated ScoC no longer binds and scpA transcription is up-regulated. Other mechanisms for gene expression regulation probably exist. Binds DNA with and without the target sequence. Although it resembles a restriction-modification system, it does not have detectable endonuclease activity under tested conditions. A gamma subtype methylase. The protein is DNA methyltransferase A of Bacillus subtilis (strain 168).